The chain runs to 658 residues: Transport protein particle subunit trs85-1 (658 aa).

The protein belongs to the TRS85 family. Part of the multisubunit TRAPP (transport protein particle) complexes I and II.

It localises to the golgi apparatus. It is found in the cis-Golgi network. Component of the TRAPP I and TRAPP II complexes. TRAPP I plays a key role in the late stages of endoplasmic reticulum to Golgi traffic. TRAPP II seems to play a role in intra-Golgi transport. Has a role late in meiosis following DNA replication. This Schizosaccharomyces pombe (strain 972 / ATCC 24843) (Fission yeast) protein is Transport protein particle subunit trs85-1 (trs85-1).